The sequence spans 342 residues: (Lyso)-N-acylphosphatidylethanolamine lipase (342 aa).

Positions 70–201 constitute an AB hydrolase-1 domain; sequence PLVMVHGFGG…KAVASVLGRS (132 aa).

Belongs to the peptidase S33 family. ABHD4/ABHD5 subfamily.

It carries out the reaction N-hexadecanoyl-1,2-di-(9Z-octadecenoyl)-sn-glycero-3-phosphoethanolamine + H2O = N-hexadecanoyl-1-(9Z-octadecenoyl)-sn-glycero-3-phosphoethanolamine + (9Z)-octadecenoate + H(+). It catalyses the reaction an N-acyl-1,2-diacyl-sn-glycero-3-phosphoethanolamine + H2O = N,1-diacyl-sn-glycero-3-phosphoethanolamine + a fatty acid + H(+). The enzyme catalyses N-hexadecanoyl-1-(9Z-octadecenoyl)-sn-glycero-3-phosphoethanolamine + H2O = N-hexadecanoyl-sn-glycero-3-phosphoethanolamine + (9Z)-octadecenoate + H(+). The catalysed reaction is N-octadecanoyl-1-(9Z-octadecenoyl)-sn-glycero-3-phosphoethanolamine + H2O = N-octadecanoyl-sn-glycero-3-phospho-ethanolamine + (9Z)-octadecenoate + H(+). It carries out the reaction N-eicosanoyl-1-(9Z-octadecenoyl)-sn-glycero-3-phosphoethanolamine + H2O = N-eicosanoyl-sn-glycero-3-phosphoethanolamine + (9Z)-octadecenoate + H(+). It catalyses the reaction N,1-di-(9Z-octadecenoyl)-sn-glycero-3-phosphoethanolamine + H2O = N-(9Z-octadecenoyl)-sn-glycero-3-phosphoethanolamine + (9Z)-octadecenoate + H(+). The enzyme catalyses N-(5Z,8Z,11Z,14Z-eicosatetraenoyl)-1-(9Z-octadecenoyl)-sn-glycero-3-phosphoethanolamine + H2O = N-(5Z,8Z,11Z,14Z-eicosatetraenoyl)-sn-glycero-3-phosphoethanolamine + (9Z)-octadecenoate + H(+). The catalysed reaction is 1-octadecanoyl-2-(9Z-octadecenoyl)-sn-glycero-3-phospho-(N-hexadecanoyl)-serine + H2O = 1-octadecanoyl-2-hydroxy-sn-glycero-3-phospho-(N-hexadecanoyl)-serine + (9Z)-octadecenoate + H(+). It carries out the reaction 1-O-(1Z-octadecenoyl)-2-(9Z-octadecenoyl)-sn-glycero-3-phospho-N-hexadecanoyl-ethanolamine + H2O = 1-O-(1Z-octadecenyl)-sn-glycero-3-phospho-N-hexadecanoyl-ethanolamine + (9Z)-octadecenoate + H(+). It catalyses the reaction N,1-diacyl-sn-glycero-3-phosphoethanolamine + H2O = N-acyl-sn-glycero-3-phosphoethanolamine + a fatty acid + H(+). In terms of biological role, lysophospholipase selective for N-acyl phosphatidylethanolamine (NAPE). Contributes to the biosynthesis of N-acyl ethanolamines, including the endocannabinoid anandamide by hydrolyzing the sn-1 and sn-2 acyl chains from N-acyl phosphatidylethanolamine (NAPE) generating glycerophospho-N-acyl ethanolamine (GP-NAE), an intermediate for N-acyl ethanolamine biosynthesis. Hydrolyzes substrates bearing saturated, monounsaturated, polyunsaturated N-acyl chains. Shows no significant activity towards other lysophospholipids, including lysophosphatidylcholine, lysophosphatidylethanolamine and lysophosphatidylserine. This chain is (Lyso)-N-acylphosphatidylethanolamine lipase, found in Homo sapiens (Human).